The chain runs to 465 residues: 3-isopropylmalate dehydratase large subunit (465 aa).

The [4Fe-4S] cluster site is built by cysteine 346, cysteine 406, and cysteine 409.

The protein belongs to the aconitase/IPM isomerase family. LeuC type 1 subfamily. As to quaternary structure, heterodimer of LeuC and LeuD. It depends on [4Fe-4S] cluster as a cofactor.

The enzyme catalyses (2R,3S)-3-isopropylmalate = (2S)-2-isopropylmalate. It functions in the pathway amino-acid biosynthesis; L-leucine biosynthesis; L-leucine from 3-methyl-2-oxobutanoate: step 2/4. Its function is as follows. Catalyzes the isomerization between 2-isopropylmalate and 3-isopropylmalate, via the formation of 2-isopropylmaleate. The polypeptide is 3-isopropylmalate dehydratase large subunit (Psychromonas ingrahamii (strain DSM 17664 / CCUG 51855 / 37)).